The sequence spans 359 residues: APRTVLLLLSAALALTETWAGSHSMRYFYTSVSRPGRGEPRFITVGYVDDTQFVRFDSDAASPRMEPRAPWIEQEGPEYWDRETRNMKASAQTDRENLRIALRYYNQSEAGSHTWQTMYGCDMGPDGRLLRGYGQYAYDGKDYIALNEDLSSWTAADTAAQITQRKWEAAREAEQRRAYLEGTCVEWLRRYLENGKETLQRADPPKTHVTHHPISDHEATLRCWALGFYPAEITLTWQRDGEDQTQDTELVETRPEGDRTFQKWAAVVVPSGEEQRYTCHVQHEGLPKPLTLRWEPSSQSTIPIVGIVAGLAVLVVTVAVVAVVAAVMCRRKSSGGKGGSYSQAASSDSAQGSDVSLTA.

The N-terminal stretch at 1–20 (APRTVLLLLSAALALTETWA) is a signal peptide. Residues 21–110 (GSHSMRYFYT…ALRYYNQSEA (90 aa)) are alpha-1. The Extracellular portion of the chain corresponds to 21–305 (GSHSMRYFYT…PSSQSTIPIV (285 aa)). The N-linked (GlcNAc...) asparagine glycan is linked to asparagine 106. The tract at residues 111–202 (GSHTWQTMYG…ENGKETLQRA (92 aa)) is alpha-2. Disulfide bonds link cysteine 121/cysteine 184 and cysteine 223/cysteine 279. Positions 203 to 294 (DPPKTHVTHH…GLPKPLTLRW (92 aa)) are alpha-3. The region spanning 205-291 (PKTHVTHHPI…QHEGLPKPLT (87 aa)) is the Ig-like C1-type domain. The tract at residues 295–305 (EPSSQSTIPIV) is connecting peptide. The chain crosses the membrane as a helical span at residues 306–329 (GIVAGLAVLVVTVAVVAVVAAVMC). Residues 330-359 (RRKSSGGKGGSYSQAASSDSAQGSDVSLTA) are Cytoplasmic-facing. The interval 332–359 (KSSGGKGGSYSQAASSDSAQGSDVSLTA) is disordered. Residues 340-359 (SYSQAASSDSAQGSDVSLTA) show a composition bias toward low complexity. 2 positions are modified to phosphoserine: serine 353 and serine 356.

The protein belongs to the MHC class I family. As to quaternary structure, heterodimer of an alpha chain and a beta chain (beta-2-microglobulin).

It localises to the membrane. Functionally, involved in the presentation of foreign antigens to the immune system. This chain is Patr class I histocompatibility antigen, B-1 alpha chain, found in Pan troglodytes (Chimpanzee).